We begin with the raw amino-acid sequence, 40 residues long: Large ribosomal subunit protein bL36B (40 aa).

It belongs to the bacterial ribosomal protein bL36 family.

This chain is Large ribosomal subunit protein bL36B, found in Kocuria rhizophila (strain ATCC 9341 / DSM 348 / NBRC 103217 / DC2201).